A 105-amino-acid chain; its full sequence is DNA-directed RNA polymerases I and III subunit RPAC2 (105 aa).

Belongs to the archaeal Rpo11/eukaryotic RPB11/RPC19 RNA polymerase subunit family. In terms of assembly, component of the RNA polymerase I (Pol I) and RNA polymerase III (Pol III) complexes consisting of at least 13 and 17 subunits, respectively.

It is found in the nucleus. Functionally, DNA-dependent RNA polymerase catalyzes the transcription of DNA into RNA using the four ribonucleoside triphosphates as substrates. Common core component of RNA polymerases I and III which synthesize ribosomal RNA precursors and small RNAs, such as 5S rRNA and tRNAs, respectively. In Drosophila melanogaster (Fruit fly), this protein is DNA-directed RNA polymerases I and III subunit RPAC2.